A 491-amino-acid polypeptide reads, in one-letter code: Glutamyl-tRNA(Gln) amidotransferase subunit A (491 aa).

Residues K77 and S152 each act as charge relay system in the active site. S176 serves as the catalytic Acyl-ester intermediate.

Belongs to the amidase family. GatA subfamily. In terms of assembly, heterotrimer of A, B and C subunits.

The enzyme catalyses L-glutamyl-tRNA(Gln) + L-glutamine + ATP + H2O = L-glutaminyl-tRNA(Gln) + L-glutamate + ADP + phosphate + H(+). In terms of biological role, allows the formation of correctly charged Gln-tRNA(Gln) through the transamidation of misacylated Glu-tRNA(Gln) in organisms which lack glutaminyl-tRNA synthetase. The reaction takes place in the presence of glutamine and ATP through an activated gamma-phospho-Glu-tRNA(Gln). The sequence is that of Glutamyl-tRNA(Gln) amidotransferase subunit A from Chlamydia trachomatis serovar A (strain ATCC VR-571B / DSM 19440 / HAR-13).